The sequence spans 179 residues: Putative 5'(3')-deoxyribonucleotidase (179 aa).

Aspartate 9 acts as the Nucleophile in catalysis. Residues aspartate 9, aspartate 11, and aspartate 135 each coordinate Mg(2+). Aspartate 11 serves as the catalytic Proton donor.

It belongs to the 5'(3')-deoxyribonucleotidase family. Mg(2+) is required as a cofactor.

Dephosphorylates the 5' and 2'(3')-phosphates of deoxyribonucleotides. This chain is Putative 5'(3')-deoxyribonucleotidase, found in Staphylococcus epidermidis (strain ATCC 35984 / DSM 28319 / BCRC 17069 / CCUG 31568 / BM 3577 / RP62A).